We begin with the raw amino-acid sequence, 245 residues long: Ribosomal RNA small subunit methyltransferase G (245 aa).

Residues G85, F90, 108–110, 136–137, and R155 contribute to the S-adenosyl-L-methionine site; these read DST and AE.

The protein belongs to the methyltransferase superfamily. RNA methyltransferase RsmG family.

Its subcellular location is the cytoplasm. In terms of biological role, specifically methylates the N7 position of a guanine in 16S rRNA. The polypeptide is Ribosomal RNA small subunit methyltransferase G (Nostoc sp. (strain PCC 7120 / SAG 25.82 / UTEX 2576)).